The primary structure comprises 318 residues: Lipoyl synthase 1 (318 aa).

Residues 6-32 (DTISNPLRPRHPEKVNRPDSASPPKPD) are disordered. Positions 60, 65, 71, 86, 90, 93, and 299 each coordinate [4Fe-4S] cluster. Residues 72-288 (WDKKHATFMI…EKVAYTKGFL (217 aa)) form the Radical SAM core domain.

Belongs to the radical SAM superfamily. Lipoyl synthase family. Requires [4Fe-4S] cluster as cofactor.

The protein localises to the cytoplasm. It catalyses the reaction [[Fe-S] cluster scaffold protein carrying a second [4Fe-4S](2+) cluster] + N(6)-octanoyl-L-lysyl-[protein] + 2 oxidized [2Fe-2S]-[ferredoxin] + 2 S-adenosyl-L-methionine + 4 H(+) = [[Fe-S] cluster scaffold protein] + N(6)-[(R)-dihydrolipoyl]-L-lysyl-[protein] + 4 Fe(3+) + 2 hydrogen sulfide + 2 5'-deoxyadenosine + 2 L-methionine + 2 reduced [2Fe-2S]-[ferredoxin]. The protein operates within protein modification; protein lipoylation via endogenous pathway; protein N(6)-(lipoyl)lysine from octanoyl-[acyl-carrier-protein]: step 2/2. Its function is as follows. Catalyzes the radical-mediated insertion of two sulfur atoms into the C-6 and C-8 positions of the octanoyl moiety bound to the lipoyl domains of lipoate-dependent enzymes, thereby converting the octanoylated domains into lipoylated derivatives. The protein is Lipoyl synthase 1 of Bradyrhizobium diazoefficiens (strain JCM 10833 / BCRC 13528 / IAM 13628 / NBRC 14792 / USDA 110).